Consider the following 269-residue polypeptide: Meiotic drive suppressor wtf5 (269 aa).

The tract at residues 1–65 (MKNNYTSLKS…NTHRENHSYG (65 aa)) is disordered. A compositionally biased stretch (basic and acidic residues) spans 19–30 (KTDHEIDLEKGP). Helical transmembrane passes span 73–95 (LLII…VCYL), 110–132 (WTLF…YFYE), and 206–228 (WGLK…VFIA).

It belongs to the WTF family. Homomer. Interacts with other proteins that exhibit high sequence similarity.

It localises to the spore membrane. Its subcellular location is the vacuole membrane. Functionally, acts as a suppressor component of the dual wtf meiotic drive system, and can suppress but not confer meiotic drive by compatible poisons. Wtf meiotic drive systems promote unequal transmission of alleles from the parental zygote to progeny spores by encoding a poison and an antidote from the same locus; the poison is trans-acting and forms toxic aggregates in all spores within an ascus, wherease the antidote is spore-specific and targets aggregates for degradation by the vacuole. Meiotic drive by wtf systems therefore lead to poisoning of all progeny that do not inherit the dual poison/antidote allele, or express a compatible antidote. The chain is Meiotic drive suppressor wtf5 from Schizosaccharomyces pombe (strain 972 / ATCC 24843) (Fission yeast).